We begin with the raw amino-acid sequence, 639 residues long: ATP-dependent zinc metalloprotease FtsH (639 aa).

The Cytoplasmic portion of the chain corresponds to 1–15; that stretch reads MDNEKQASPPPAAPP. Residues 16–36 form a helical membrane-spanning segment; the sequence is LNWRYLLWIILLGIFLISWLG. Residues 37 to 123 are Periplasmic-facing; the sequence is NAGRQAGDEI…VQAKSEEPSL (87 aa). Residues 124–144 form a helical membrane-spanning segment; the sequence is WMQAIIGILPWFLILGLIFYV. At 145-639 the chain is on the cytoplasmic side; sequence SYRMQQRMMG…HNEAVATGAG (495 aa). 221–228 lines the ATP pocket; it reads GRPGTGKT. Position 442 (histidine 442) interacts with Zn(2+). The active site involves glutamate 443. Positions 446 and 518 each coordinate Zn(2+).

In the central section; belongs to the AAA ATPase family. This sequence in the C-terminal section; belongs to the peptidase M41 family. As to quaternary structure, homohexamer. Zn(2+) serves as cofactor.

It is found in the cell inner membrane. In terms of biological role, acts as a processive, ATP-dependent zinc metallopeptidase for both cytoplasmic and membrane proteins. Plays a role in the quality control of integral membrane proteins. The polypeptide is ATP-dependent zinc metalloprotease FtsH (Nitrosococcus oceani (strain ATCC 19707 / BCRC 17464 / JCM 30415 / NCIMB 11848 / C-107)).